Consider the following 273-residue polypeptide: Small ribosomal subunit protein uS3 (273 aa).

The 69-residue stretch at isoleucine 43–lysine 111 folds into the KH type-2 domain. Residues glutamine 218–glycine 227 show a composition bias toward low complexity. Positions glutamine 218 to alanine 273 are disordered. The segment covering arginine 228–aspartate 239 has biased composition (basic and acidic residues). Residues alanine 249–alanine 273 show a composition bias toward low complexity.

The protein belongs to the universal ribosomal protein uS3 family. Part of the 30S ribosomal subunit. Forms a tight complex with proteins S10 and S14.

Functionally, binds the lower part of the 30S subunit head. Binds mRNA in the 70S ribosome, positioning it for translation. This Paenarthrobacter aurescens (strain TC1) protein is Small ribosomal subunit protein uS3.